Consider the following 425-residue polypeptide: Glutamate-1-semialdehyde 2,1-aminomutase (425 aa).

N6-(pyridoxal phosphate)lysine is present on Lys265.

The protein belongs to the class-III pyridoxal-phosphate-dependent aminotransferase family. HemL subfamily. In terms of assembly, homodimer. The cofactor is pyridoxal 5'-phosphate.

Its subcellular location is the cytoplasm. The catalysed reaction is (S)-4-amino-5-oxopentanoate = 5-aminolevulinate. It participates in porphyrin-containing compound metabolism; protoporphyrin-IX biosynthesis; 5-aminolevulinate from L-glutamyl-tRNA(Glu): step 2/2. This Thiobacillus denitrificans (strain ATCC 25259 / T1) protein is Glutamate-1-semialdehyde 2,1-aminomutase.